The sequence spans 226 residues: Glycerol-3-phosphate acyltransferase (226 aa).

The next 6 membrane-spanning stretches (helical) occupy residues 1–21 (MGFW…LGSF), 60–80 (FVLG…YYLF), 102–122 (LVTL…FLGF), 134–154 (ILLA…AVVV), 159–178 (IVSL…MVFL), and 182–197 (LPYI…YVIL).

It belongs to the PlsY family. As to quaternary structure, probably interacts with PlsX.

It localises to the cell inner membrane. It catalyses the reaction an acyl phosphate + sn-glycerol 3-phosphate = a 1-acyl-sn-glycero-3-phosphate + phosphate. It functions in the pathway lipid metabolism; phospholipid metabolism. In terms of biological role, catalyzes the transfer of an acyl group from acyl-phosphate (acyl-PO(4)) to glycerol-3-phosphate (G3P) to form lysophosphatidic acid (LPA). This enzyme utilizes acyl-phosphate as fatty acyl donor, but not acyl-CoA or acyl-ACP. This is Glycerol-3-phosphate acyltransferase from Nostoc sp. (strain PCC 7120 / SAG 25.82 / UTEX 2576).